A 467-amino-acid chain; its full sequence is Argininosuccinate lyase (467 aa).

Belongs to the lyase 1 family. Argininosuccinate lyase subfamily.

It localises to the cytoplasm. The enzyme catalyses 2-(N(omega)-L-arginino)succinate = fumarate + L-arginine. It functions in the pathway amino-acid biosynthesis; L-arginine biosynthesis; L-arginine from L-ornithine and carbamoyl phosphate: step 3/3. The sequence is that of Argininosuccinate lyase from Methylibium petroleiphilum (strain ATCC BAA-1232 / LMG 22953 / PM1).